Consider the following 704-residue polypeptide: Structure-specific endonuclease subunit SLX1 homolog (704 aa).

The GIY-YIG domain maps to 4–90 (RFHCVYLLTS…TASARLRHTI (87 aa)). Disordered stretches follow at residues 157-180 (ESPRVGTQQHSQRSSSLQGQADGV), 290-323 (ASFASDSDDEDTRRLAPYCPSAGSSTPSPQRVRT), and 354-378 (GAALRSFSSPPPPRESSPRSASRPP). Polar residues-rich tracts occupy residues 161–175 (VGTQQHSQRSSSLQG) and 311–320 (AGSSTPSPQR). The SLX1-type zinc-finger motif lies at 446 to 526 (CSLCALPLQP…PSQPCPCPLC (81 aa)). Disordered regions lie at residues 601 to 629 (VPGAASTVPAPTMHAGPARRDAPRVSSPI) and 650 to 671 (ASLAALSPTSASPISRHNGHSN). Residues 650–662 (ASLAALSPTSASP) are compositionally biased toward low complexity.

Belongs to the SLX1 family. In terms of assembly, forms a heterodimer with a member of the SLX4 family. The cofactor is a divalent metal cation.

It localises to the nucleus. Functionally, catalytic subunit of a heterodimeric structure-specific endonuclease that resolves DNA secondary structures generated during DNA repair and recombination. Has endonuclease activity towards branched DNA substrates, introducing single-strand cuts in duplex DNA close to junctions with ss-DNA. This chain is Structure-specific endonuclease subunit SLX1 homolog, found in Leishmania major.